The sequence spans 486 residues: Cardiolipin synthase A (486 aa).

The next 2 helical transmembrane spans lie at Thr3–Val23 and Met38–Phe58. PLD phosphodiesterase domains are found at residues Met219–Arg246 and Lys399–Ser426. Catalysis depends on residues His224, Lys226, Asp231, His404, Lys406, and Asp411.

Belongs to the phospholipase D family. Cardiolipin synthase subfamily. ClsA sub-subfamily.

The protein localises to the cell inner membrane. It carries out the reaction 2 a 1,2-diacyl-sn-glycero-3-phospho-(1'-sn-glycerol) = a cardiolipin + glycerol. Functionally, catalyzes the reversible phosphatidyl group transfer from one phosphatidylglycerol molecule to another to form cardiolipin (CL) (diphosphatidylglycerol) and glycerol. The polypeptide is Cardiolipin synthase A (Pectobacterium atrosepticum (strain SCRI 1043 / ATCC BAA-672) (Erwinia carotovora subsp. atroseptica)).